The chain runs to 235 residues: MNKVTLLHEGKAKKVWQTDNPDLIIQEFKDDATAFNNKKKGSIADKGVTNNAIASRLFTMLGENGIPTHFVGKLNDRDMLCKKLDILLIEVVTRNIAAGSLVRRYGFKEGTVLSKPIVELYLKNDELDDPLMNEDHAVALGLGTCEEVAHLKAMAKKINSLLVPWFAERKLRLVDFKLEFGRHKGEILLGDEISPDTCRFWDAESGEKLDKDRFRLDLGGVEDAYSEVKRRVLEQ.

The protein belongs to the SAICAR synthetase family.

It carries out the reaction 5-amino-1-(5-phospho-D-ribosyl)imidazole-4-carboxylate + L-aspartate + ATP = (2S)-2-[5-amino-1-(5-phospho-beta-D-ribosyl)imidazole-4-carboxamido]succinate + ADP + phosphate + 2 H(+). Its pathway is purine metabolism; IMP biosynthesis via de novo pathway; 5-amino-1-(5-phospho-D-ribosyl)imidazole-4-carboxamide from 5-amino-1-(5-phospho-D-ribosyl)imidazole-4-carboxylate: step 1/2. The protein is Phosphoribosylaminoimidazole-succinocarboxamide synthase of Chlorobaculum tepidum (strain ATCC 49652 / DSM 12025 / NBRC 103806 / TLS) (Chlorobium tepidum).